Consider the following 543-residue polypeptide: MAAKDVKFSGDARERMLRGVDILANAVKVTLGPKGRNVVIEKSFGAPRITKDGVTVAKEIELEDKFENMGAQMVREVASKTNDLAGDGTTTATVLAQAIVREGAKAVAAGMNPMDLKRGIDIAVAAVIKDIEKRAKPVASSSEVAQVGTISANGDAAIGKMIAQAMQKVGNEGVITVEENKSLDTEVDIVEGMKFDRGYLSPYFVTNAEKMTAELEDAYILLHEKKLSGLQAMLPVLEAVVQSGKPLVIIAEDVEGEALATLVVNRLRGGLKVAAVKAPGFGDRRKAMLEDLAILTGGQLISEELGIKLENVTVKMLGRAKKVVIDKENTTIVNGAGKKPDIEARVGQIKAQIEETTSDYDREKLQERLAKLAGGVAVIRVGGATEIEVKEKKDRVEDALNATRAAVQEGIVPGGGVALLRAKKAVGRLTNANDDVQAGINIVLKALEAPIRQISENAGVEGSIVVGKILENKSETFGFDAQNEDYVDMVEKGIIDPAKVVRTALQDASSVAGLLVTTEAMVAEAPKKDAPPAMPAGGGMGGF.

ATP-binding positions include 30 to 33, K51, 87 to 91, G415, and D496; these read TLGP and DGTTT.

It belongs to the chaperonin (HSP60) family. As to quaternary structure, forms a cylinder of 14 subunits composed of two heptameric rings stacked back-to-back. Interacts with the co-chaperonin GroES.

It is found in the cytoplasm. The enzyme catalyses ATP + H2O + a folded polypeptide = ADP + phosphate + an unfolded polypeptide.. In terms of biological role, together with its co-chaperonin GroES, plays an essential role in assisting protein folding. The GroEL-GroES system forms a nano-cage that allows encapsulation of the non-native substrate proteins and provides a physical environment optimized to promote and accelerate protein folding. The chain is Chaperonin GroEL 7 from Bradyrhizobium diazoefficiens (strain JCM 10833 / BCRC 13528 / IAM 13628 / NBRC 14792 / USDA 110).